A 185-amino-acid polypeptide reads, in one-letter code: MSTHTARRAGATAGHDRDRGTEPGRTEFRRAMGLLPTGVAVVTVGSGEQTEAVTVGSVVSVSLDPALVLVSLGSTGRLVEAIDRAGGFAVNVLTTEQSDLSACFASHDRPHGRGAEERLGGVAGASGHVLLRDAVLSMECRTEHRYPGGDHVLFLGRVDELHTAEAAGSPLVHHRGAYTTLKDPC.

A compositionally biased stretch (low complexity) spans 1–13 (MSTHTARRAGATA). The disordered stretch occupies residues 1-24 (MSTHTARRAGATAGHDRDRGTEPG). Residues 14 to 24 (GHDRDRGTEPG) are compositionally biased toward basic and acidic residues.

It belongs to the non-flavoprotein flavin reductase family. As to quaternary structure, does not interact with AsuE1, suggesting a possible transient interaction between the two enzymes instead of formation of a stable complex.

The enzyme catalyses FMNH2 + NAD(+) = FMN + NADH + 2 H(+). It participates in antibiotic biosynthesis. In terms of biological role, involved in the biosynthesis of the antibiotic asukamycin. When flavin concentration is low, AsuE2 assists the protoasukamycin 4-monooxygenase AsuE1 by providing a reduced form of flavin, enhancing AsuE1 activity. This is NADH-dependent FMN reductase AsuE2 from Streptomyces nodosus subsp. asukaensis.